A 388-amino-acid polypeptide reads, in one-letter code: MNLHEYQAKQLFARYGLPAPVGYACTTPREAEEAASKIGAGPWVVKCQVHAGGRGKAGGVKVVKSKEEIRAFAEHWLGKRLVTYQTDANGQPVNQILVEAATDIDKELYLGAVVDRSSRRVVFMASTEGGVEIEKVAEETPHLIHKIAIDPLAGPMPYQGRELAFKLGLEGKQVQQFTKIFMGLATIFLERDLALIEINPLVITKQGDLICLDGKLGADGNALFRQPDLREMRDQSQEDPREAQAAQWELNYVALDGNIGCMVNGAGLAMGTMDIVKLHGGEPANFLDVGGGATKERVTEAFKIILSDDNVKAVLVNIFGGIVRCDLIADGIIGAVAEVGVNVPVVVRLEGNNAELGAKKLADSGLNIIAAKSLTDAAQQVVAAVEGK.

An ATP-grasp domain is found at 9 to 244 (KQLFARYGLP…QSQEDPREAQ (236 aa)). ATP contacts are provided by residues Lys46, 53-55 (GRG), Glu99, Thr102, and Glu107. Residues Asn199 and Asp213 each coordinate Mg(2+). Substrate-binding positions include Asn264 and 321-323 (GIV).

This sequence belongs to the succinate/malate CoA ligase beta subunit family. Heterotetramer of two alpha and two beta subunits. The cofactor is Mg(2+).

The catalysed reaction is succinate + ATP + CoA = succinyl-CoA + ADP + phosphate. The enzyme catalyses GTP + succinate + CoA = succinyl-CoA + GDP + phosphate. The protein operates within carbohydrate metabolism; tricarboxylic acid cycle; succinate from succinyl-CoA (ligase route): step 1/1. In terms of biological role, succinyl-CoA synthetase functions in the citric acid cycle (TCA), coupling the hydrolysis of succinyl-CoA to the synthesis of either ATP or GTP and thus represents the only step of substrate-level phosphorylation in the TCA. The beta subunit provides nucleotide specificity of the enzyme and binds the substrate succinate, while the binding sites for coenzyme A and phosphate are found in the alpha subunit. The chain is Succinate--CoA ligase [ADP-forming] subunit beta from Klebsiella pneumoniae (strain 342).